The primary structure comprises 152 residues: 3-hydroxyacyl-[acyl-carrier-protein] dehydratase FabZ (152 aa).

H58 is a catalytic residue.

The protein belongs to the thioester dehydratase family. FabZ subfamily.

It is found in the cytoplasm. The catalysed reaction is a (3R)-hydroxyacyl-[ACP] = a (2E)-enoyl-[ACP] + H2O. In terms of biological role, involved in unsaturated fatty acids biosynthesis. Catalyzes the dehydration of short chain beta-hydroxyacyl-ACPs and long chain saturated and unsaturated beta-hydroxyacyl-ACPs. This is 3-hydroxyacyl-[acyl-carrier-protein] dehydratase FabZ from Prochlorococcus marinus (strain MIT 9515).